The following is a 469-amino-acid chain: Cyclin-dependent kinase 14 (469 aa).

Serine 24, serine 78, and serine 95 each carry phosphoserine. Residues 103–133 are disordered; it reads FKTSSTGKESPKVRRHSSPSSPTSPKFGKAD. Serine 134 carries the phosphoserine modification. The Protein kinase domain occupies 135–419; it reads YEKLEKLGEG…AQAALSHEYF (285 aa). ATP contacts are provided by residues 141–149 and lysine 164; that span reads LGEGSYATV. The active-site Proton acceptor is aspartate 256. Residues 449 to 469 are disordered; it reads ESMRAFGKNNSYGKSLSNSKH. The segment covering 456 to 469 has biased composition (polar residues); it reads KNNSYGKSLSNSKH.

Belongs to the protein kinase superfamily. CMGC Ser/Thr protein kinase family. CDC2/CDKX subfamily. As to quaternary structure, found in a complex with LRP6, CCNY and CAPRIN2 during G2/M stage; CAPRIN2 functions as a scaffold for the complex by binding to CCNY via its N terminus and to CDK14 via its C terminus. Interacts with CCNY; CCNY mediates its recruitment to the plasma membrane and promotes phosphorylation of LRP6. Interacts with CCDN3 and CDKN1A. Interacts with SEPT8. Interacts with 14-3-3 proteina YWHAB, YWHAE, YWHAH and YWHAQ. In terms of tissue distribution, highly expressed in brain, pancreas, kidney, heart, testis and ovary. Also detected at lower levels in other tissues except in spleen and thymus where expression is barely detected.

The protein localises to the cell membrane. Its subcellular location is the cytoplasm. The protein resides in the nucleus. The catalysed reaction is L-seryl-[protein] + ATP = O-phospho-L-seryl-[protein] + ADP + H(+). It carries out the reaction L-threonyl-[protein] + ATP = O-phospho-L-threonyl-[protein] + ADP + H(+). With respect to regulation, serine/threonine-protein kinase activity is promoted by associated cyclins CCDN3 and CCNY and repressed by CDKN1A. Serine/threonine-protein kinase involved in the control of the eukaryotic cell cycle, whose activity is controlled by an associated cyclin. Acts as a cell-cycle regulator of Wnt signaling pathway during G2/M phase by mediating the phosphorylation of LRP6 at 'Ser-1490', leading to the activation of the Wnt signaling pathway. Acts as a regulator of cell cycle progression and cell proliferation via its interaction with CCDN3. Phosphorylates RB1 in vitro, however the relevance of such result remains to be confirmed in vivo. May also play a role in meiosis, neuron differentiation and may indirectly act as a negative regulator of insulin-responsive glucose transport. In Homo sapiens (Human), this protein is Cyclin-dependent kinase 14 (CDK14).